The chain runs to 386 residues: Methionyl-tRNA formyltransferase, mitochondrial (386 aa).

Belongs to the Fmt family.

Its subcellular location is the mitochondrion. It catalyses the reaction L-methionyl-tRNA(fMet) + (6R)-10-formyltetrahydrofolate = N-formyl-L-methionyl-tRNA(fMet) + (6S)-5,6,7,8-tetrahydrofolate + H(+). Its function is as follows. Methionyl-tRNA formyltransferase that formylates methionyl-tRNA in mitochondria and is crucial for translation initiation. This chain is Methionyl-tRNA formyltransferase, mitochondrial (Mtfmt), found in Mus musculus (Mouse).